We begin with the raw amino-acid sequence, 199 residues long: LexA repressor (199 aa).

The segment at residues 28-47 (IRDIAKHFKLTPRGAHIHVI) is a DNA-binding region (H-T-H motif). Catalysis depends on for autocatalytic cleavage activity residues Ser-120 and Lys-157.

Belongs to the peptidase S24 family. Homodimer.

It catalyses the reaction Hydrolysis of Ala-|-Gly bond in repressor LexA.. Functionally, represses a number of genes involved in the response to DNA damage (SOS response), including recA and lexA. In the presence of single-stranded DNA, RecA interacts with LexA causing an autocatalytic cleavage which disrupts the DNA-binding part of LexA, leading to derepression of the SOS regulon and eventually DNA repair. The sequence is that of LexA repressor from Thermosipho melanesiensis (strain DSM 12029 / CIP 104789 / BI429).